A 227-amino-acid polypeptide reads, in one-letter code: Cytochrome c oxidase subunit 2 (227 aa).

The Mitochondrial intermembrane portion of the chain corresponds to 1-14 (MAYPFQLGLQDATS). Residues 15–45 (PIMEELLHFHDHTLMIVFLISSLVLYIISLM) form a helical membrane-spanning segment. Residues 46 to 59 (LTTKLTHTSTMDAQ) lie on the Mitochondrial matrix side of the membrane. The chain crosses the membrane as a helical span at residues 60–87 (EVETVWTILPAIILILIALPSLRILYMM). The Mitochondrial intermembrane portion of the chain corresponds to 88–227 (DEINNPSLTV…YFETWSALMV (140 aa)). His161, Cys196, Glu198, Cys200, His204, and Met207 together coordinate Cu cation. Mg(2+) is bound at residue Glu198. The residue at position 218 (Tyr218) is a Phosphotyrosine.

Belongs to the cytochrome c oxidase subunit 2 family. As to quaternary structure, component of the cytochrome c oxidase (complex IV, CIV), a multisubunit enzyme composed of 14 subunits. The complex is composed of a catalytic core of 3 subunits MT-CO1, MT-CO2 and MT-CO3, encoded in the mitochondrial DNA, and 11 supernumerary subunits COX4I, COX5A, COX5B, COX6A, COX6B, COX6C, COX7A, COX7B, COX7C, COX8 and NDUFA4, which are encoded in the nuclear genome. The complex exists as a monomer or a dimer and forms supercomplexes (SCs) in the inner mitochondrial membrane with NADH-ubiquinone oxidoreductase (complex I, CI) and ubiquinol-cytochrome c oxidoreductase (cytochrome b-c1 complex, complex III, CIII), resulting in different assemblies (supercomplex SCI(1)III(2)IV(1) and megacomplex MCI(2)III(2)IV(2)). Found in a complex with TMEM177, COA6, COX18, COX20, SCO1 and SCO2. Interacts with TMEM177 in a COX20-dependent manner. Interacts with COX20. Interacts with COX16. Requires Cu cation as cofactor.

The protein localises to the mitochondrion inner membrane. It catalyses the reaction 4 Fe(II)-[cytochrome c] + O2 + 8 H(+)(in) = 4 Fe(III)-[cytochrome c] + 2 H2O + 4 H(+)(out). Component of the cytochrome c oxidase, the last enzyme in the mitochondrial electron transport chain which drives oxidative phosphorylation. The respiratory chain contains 3 multisubunit complexes succinate dehydrogenase (complex II, CII), ubiquinol-cytochrome c oxidoreductase (cytochrome b-c1 complex, complex III, CIII) and cytochrome c oxidase (complex IV, CIV), that cooperate to transfer electrons derived from NADH and succinate to molecular oxygen, creating an electrochemical gradient over the inner membrane that drives transmembrane transport and the ATP synthase. Cytochrome c oxidase is the component of the respiratory chain that catalyzes the reduction of oxygen to water. Electrons originating from reduced cytochrome c in the intermembrane space (IMS) are transferred via the dinuclear copper A center (CU(A)) of subunit 2 and heme A of subunit 1 to the active site in subunit 1, a binuclear center (BNC) formed by heme A3 and copper B (CU(B)). The BNC reduces molecular oxygen to 2 water molecules using 4 electrons from cytochrome c in the IMS and 4 protons from the mitochondrial matrix. This Urocyon cinereoargenteus (Gray fox) protein is Cytochrome c oxidase subunit 2 (MT-CO2).